Consider the following 710-residue polypeptide: WD repeat-containing protein CG11141 (710 aa).

WD repeat units lie at residues 31–70 and 133–172; these read FFPA…MQKL and LHKC…HLSK. Positions 283 to 307 are disordered; that stretch reads LNPKQRSEPSGTHHTSASTSSTRHS. Low complexity predominate over residues 292-307; the sequence is SGTHHTSASTSSTRHS. T488 is subject to Phosphothreonine. Phosphoserine is present on S553. Disordered stretches follow at residues 612–635 and 685–710; these read ASIQ…GEPV and DPLA…FLDN. Composition is skewed to polar residues over residues 613 to 624 and 694 to 704; these read SIQTSSRENATN and PATSDSNTSSE.

It belongs to the WD repeat KIAA0329 family.

The sequence is that of WD repeat-containing protein CG11141 from Drosophila melanogaster (Fruit fly).